Consider the following 177-residue polypeptide: Large ribosomal subunit protein uL6 (177 aa).

A disordered region spans residues 154-177 (PEPYKGKGVRYADEQVRRKEAKKK). Positions 155-171 (EPYKGKGVRYADEQVRR) are enriched in basic and acidic residues.

It belongs to the universal ribosomal protein uL6 family. In terms of assembly, part of the 50S ribosomal subunit.

This protein binds to the 23S rRNA, and is important in its secondary structure. It is located near the subunit interface in the base of the L7/L12 stalk, and near the tRNA binding site of the peptidyltransferase center. This Alcanivorax borkumensis (strain ATCC 700651 / DSM 11573 / NCIMB 13689 / SK2) protein is Large ribosomal subunit protein uL6.